Here is a 472-residue protein sequence, read N- to C-terminus: DEAD-box ATP-dependent RNA helicase 58, chloroplastic (472 aa).

The transit peptide at 1 to 54 (MASQLLNVPHLAFFPKISYASVFSTLKPSFFHSTSTRRALKSSPSSRIINLQAV) directs the protein to the chloroplast. Residues 76-104 (RQICQGFVPEHILHRMEEIGFVFPTDIQR) carry the Q motif motif. The region spanning 107–286 (LPTLFTGRDC…DCIQQKWTKR (180 aa)) is the Helicase ATP-binding domain. 120 to 127 (AQTGSGKT) serves as a coordination point for ATP. Positions 231–234 (DEVD) match the DEAD box motif. Residues 314 to 472 (NKHQVLLALL…LMFSCEEMML (159 aa)) enclose the Helicase C-terminal domain.

This sequence belongs to the DEAD box helicase family.

It is found in the plastid. The protein localises to the chloroplast. It catalyses the reaction ATP + H2O = ADP + phosphate + H(+). This Arabidopsis thaliana (Mouse-ear cress) protein is DEAD-box ATP-dependent RNA helicase 58, chloroplastic (RH58).